Here is a 41-residue protein sequence, read N- to C-terminus: Histone H2B.3, sperm (41 aa).

Residues 1–41 form a disordered region; sequence MPRSPSKSSPKKGSPRKASPKRGGKGAKRAGKGGRRRTVVK. Short sequence motifs (SPKK motif) lie at residues 4–7, 9–12, 14–17, and 19–22; these read SPSK, SPKK, SPRK, and SPKR. The segment covering 9–41 has biased composition (basic residues); sequence SPKKGSPRKASPKRGGKGAKRAGKGGRRRTVVK. Phosphoserine is present on residues Ser-14 and Ser-19.

It belongs to the histone H2B family. In terms of assembly, the nucleosome is a histone octamer containing two molecules each of H2A, H2B, H3 and H4 assembled in one H3-H4 heterotetramer and two H2A-H2B heterodimers. The octamer wraps approximately 147 bp of DNA. Post-translationally, monoubiquitination gives a specific tag for epigenetic transcriptional activation and is also prerequisite for histone H3 'Lys-4' and 'Lys-79' methylation. Phosphorylated on SPKK motifs 3 and 4; which may regulate DNA binding. Dephosphorylated during maturation of spermatids to mature sperm and rephosphorylated at fertilization.

The protein resides in the nucleus. It is found in the chromosome. Functionally, core component of nucleosome. Nucleosomes wrap and compact DNA into chromatin, limiting DNA accessibility to the cellular machineries which require DNA as a template. Histones thereby play a central role in transcription regulation, DNA repair, DNA replication and chromosomal stability. DNA accessibility is regulated via a complex set of post-translational modifications of histones, also called histone code, and nucleosome remodeling. The sequence is that of Histone H2B.3, sperm from Echinus esculentus (Sea urchin).